The chain runs to 445 residues: Phosphoglucosamine mutase (445 aa).

Serine 102 (phosphoserine intermediate) is an active-site residue. Mg(2+) contacts are provided by serine 102, aspartate 241, aspartate 243, and aspartate 245. Position 102 is a phosphoserine (serine 102).

This sequence belongs to the phosphohexose mutase family. Mg(2+) is required as a cofactor. In terms of processing, activated by phosphorylation.

It carries out the reaction alpha-D-glucosamine 1-phosphate = D-glucosamine 6-phosphate. Functionally, catalyzes the conversion of glucosamine-6-phosphate to glucosamine-1-phosphate. The chain is Phosphoglucosamine mutase from Aliivibrio fischeri (strain ATCC 700601 / ES114) (Vibrio fischeri).